A 367-amino-acid polypeptide reads, in one-letter code: Alanine racemase (367 aa).

Lys35 (proton acceptor; specific for D-alanine) is an active-site residue. At Lys35 the chain carries N6-(pyridoxal phosphate)lysine. A substrate-binding site is contributed by Arg130. The active-site Proton acceptor; specific for L-alanine is the Tyr256. Met304 is a substrate binding site.

Belongs to the alanine racemase family. The cofactor is pyridoxal 5'-phosphate.

It carries out the reaction L-alanine = D-alanine. It participates in amino-acid biosynthesis; D-alanine biosynthesis; D-alanine from L-alanine: step 1/1. In terms of biological role, catalyzes the interconversion of L-alanine and D-alanine. May also act on other amino acids. The chain is Alanine racemase (alr) from Methylibium petroleiphilum (strain ATCC BAA-1232 / LMG 22953 / PM1).